Here is a 257-residue protein sequence, read N- to C-terminus: Imidazole glycerol phosphate synthase subunit HisF (257 aa).

Residues aspartate 12 and aspartate 131 contribute to the active site.

The protein belongs to the HisA/HisF family. In terms of assembly, heterodimer of HisH and HisF.

It is found in the cytoplasm. The catalysed reaction is 5-[(5-phospho-1-deoxy-D-ribulos-1-ylimino)methylamino]-1-(5-phospho-beta-D-ribosyl)imidazole-4-carboxamide + L-glutamine = D-erythro-1-(imidazol-4-yl)glycerol 3-phosphate + 5-amino-1-(5-phospho-beta-D-ribosyl)imidazole-4-carboxamide + L-glutamate + H(+). It functions in the pathway amino-acid biosynthesis; L-histidine biosynthesis; L-histidine from 5-phospho-alpha-D-ribose 1-diphosphate: step 5/9. IGPS catalyzes the conversion of PRFAR and glutamine to IGP, AICAR and glutamate. The HisF subunit catalyzes the cyclization activity that produces IGP and AICAR from PRFAR using the ammonia provided by the HisH subunit. The polypeptide is Imidazole glycerol phosphate synthase subunit HisF (Marinomonas sp. (strain MWYL1)).